Reading from the N-terminus, the 312-residue chain is Pyridoxal kinase (312 aa).

At Met1 the chain carries N-acetylmethionine. 2 residues coordinate pyridoxal: Ser12 and Thr47. Residue Thr47 participates in pyridoxal 5'-phosphate binding. Residue Ser59 is modified to Phosphoserine. Asp113 contributes to the ATP binding site. Position 113 (Asp113) interacts with Na(+). Residue Asp118 coordinates Mg(2+). Residue Thr148 coordinates Na(+). Residue 150 to 153 coordinates ATP; sequence NQFE. The residue at position 164 (Ser164) is a Phosphoserine. Thr186 is a binding site for Na(+). Residue 186-187 coordinates ATP; the sequence is TS. Ser213 bears the Phosphoserine mark. ATP-binding positions include 226 to 228 and Thr233; that span reads VDP. Residue 234-235 participates in pyridoxal 5'-phosphate binding; sequence GD. The Proton acceptor role is filled by Asp235. A Phosphoserine modification is found at Ser285.

This sequence belongs to the pyridoxine kinase family. Homodimer. Requires Zn(2+) as cofactor. Mg(2+) is required as a cofactor.

It localises to the cytoplasm. The protein localises to the cytosol. It catalyses the reaction pyridoxal + ATP = pyridoxal 5'-phosphate + ADP + H(+). The enzyme catalyses pyridoxamine + ATP = pyridoxamine 5'-phosphate + ADP + H(+). The catalysed reaction is pyridoxine + ATP = pyridoxine 5'-phosphate + ADP + H(+). It participates in cofactor metabolism; pyridoxal 5'-phosphate salvage; pyridoxal 5'-phosphate from pyridoxal: step 1/1. It functions in the pathway cofactor metabolism; pyridoxal 5'-phosphate salvage; pyridoxine 5'-phosphate from pyridoxine: step 1/1. Its pathway is cofactor metabolism; pyridoxal 5'-phosphate salvage; pyridoxamine 5'-phosphate from pyridoxamine: step 1/1. Its activity is regulated as follows. Activity is increased in the presence of K(+)or Na(+). In terms of biological role, catalyzes the phosphorylation of the dietary vitamin B6 vitamers pyridoxal (PL), pyridoxine (PN) and pyridoxamine (PM) to form pyridoxal 5'-phosphate (PLP), pyridoxine 5'-phosphate (PNP) and pyridoxamine 5'-phosphate (PMP), respectively. PLP is the active form of vitamin B6, and acts as a cofactor for over 140 different enzymatic reactions. The polypeptide is Pyridoxal kinase (Pdxk) (Rattus norvegicus (Rat)).